Here is a 419-residue protein sequence, read N- to C-terminus: MNIIDELEWRGAIYQQTDEEGLRKWVDEKQISLYCGIDPSGDSMHIGHLIPFMILRRFQNAGHRPIILVGGATGTIGDPSGKKEERKLQSMEQISKNVESLRVQLGKIFDFEGDSAASMVNNYDWTKDVSILDFLRDYGKEFNVNTMLSKDIVASRLEVGISFTEFAYQILQAMDFNHLYEFNDCRLQIGGSDQWGNITAGLDLIRKKQGENAKAFGLTIPLLTKADGTKFGKSEGGAIWLNPEKTTPYEFYQFWINTDDRDVVKYLKYFTFLTEAEIDELAKQVETEPHLRAAQKTLAAEMTKFVHSEEALEQALKISKALFSGDVKALTADEIEQGFKDVPTFVAEDSEANLVDWLVTLGIEPSKRQAREDVGNGAIYINGERQQDLEKIMDASDRIENKFTIVRRGKKKYFLVSYK.

Residue Tyr-34 coordinates L-tyrosine. The 'HIGH' region signature appears at 39 to 48; sequence PSGDSMHIGH. Residues Tyr-168 and Gln-172 each contribute to the L-tyrosine site. Positions 230–234 match the 'KMSKS' region motif; the sequence is KFGKS. An ATP-binding site is contributed by Lys-233. Positions 352-418 constitute an S4 RNA-binding domain; the sequence is ANLVDWLVTL…GKKKYFLVSY (67 aa).

This sequence belongs to the class-I aminoacyl-tRNA synthetase family. TyrS type 1 subfamily. As to quaternary structure, homodimer.

The protein resides in the cytoplasm. The catalysed reaction is tRNA(Tyr) + L-tyrosine + ATP = L-tyrosyl-tRNA(Tyr) + AMP + diphosphate + H(+). Functionally, catalyzes the attachment of tyrosine to tRNA(Tyr) in a two-step reaction: tyrosine is first activated by ATP to form Tyr-AMP and then transferred to the acceptor end of tRNA(Tyr). This is Tyrosine--tRNA ligase from Listeria monocytogenes serotype 4a (strain HCC23).